Consider the following 1023-residue polypeptide: Sodium/potassium-transporting ATPase subunit alpha-1 (1023 aa).

Residues 1–5 constitute a propeptide that is removed on maturation; it reads MGKGV. Over residues 1 to 11 the composition is skewed to basic and acidic residues; it reads MGKGVGRDKYE. Positions 1–39 are disordered; that stretch reads MGKGVGRDKYEPAAVSEHGDKKGKKAKKERDMDELKKEV. Over 6–96 the chain is Cytoplasmic; sequence GRDKYEPAAV…PEWVKFCRQL (91 aa). N6-acetyllysine is present on Lys9. Tyr10 carries the post-translational modification Phosphotyrosine. Ser16 carries the post-translational modification Phosphoserine. Residue Lys21 is modified to N6-acetyllysine. Positions 28–39 are enriched in basic and acidic residues; the sequence is KERDMDELKKEV. A phosphoserine mark is found at Ser40 and Ser47. A phosphoinositide-3 kinase binding region spans residues 82-84; the sequence is PPP. Residues 97–117 form a helical membrane-spanning segment; that stretch reads FGGFSMLLWIGAILCFLAYGI. Topologically, residues 118–129 are extracellular; it reads RSATEEEPPNDD. Residues 130–150 traverse the membrane as a helical segment; it reads LYLGVVLSAVVIITGCFSYYQ. The Cytoplasmic portion of the chain corresponds to 151–291; it reads EAKSSKIMES…TPIAEEIEHF (141 aa). The disordered stretch occupies residues 216-235; sequence SSLTGESEPQTRSPDFTNEN. Residue Ser228 is modified to Phosphoserine. A Phosphotyrosine modification is found at Tyr260. Residues 292-312 traverse the membrane as a helical segment; the sequence is IHLITGVAVFLGVSFFILSLI. The Extracellular portion of the chain corresponds to 313-319; it reads LEYTWLE. The chain crosses the membrane as a helical span at residues 320–340; it reads AVIFLIGIIVANVPEGLLATV. The Cytoplasmic portion of the chain corresponds to 341 to 775; sequence TVCLTLTAKR…RLIFDNLKKS (435 aa). Asp376 (4-aspartylphosphate intermediate) is an active-site residue. 2 positions are modified to phosphoserine: Ser452 and Ser484. Residue Lys487 coordinates ATP. Phosphotyrosine is present on Tyr542. A mediates interaction with SCN7A region spans residues 596 to 717; it reads RAAVPDAVGK…QGAIVAVTGD (122 aa). Lys661 carries the N6-succinyllysine modification. Phosphoserine occurs at positions 668 and 675. Positions 717 and 721 each coordinate Mg(2+). A helical transmembrane segment spans residues 776–798; the sequence is IAYTLTSNIPEITPFLIFIIANI. Over 799 to 801 the chain is Extracellular; sequence PLP. The helical transmembrane segment at 802–824 threads the bilayer; the sequence is LGTVTILCIDLGTDMVPAISLAY. At 825–849 the chain is on the cytoplasmic side; it reads EQAESDIMKRQPRNPKTDKLVNERL. A helical transmembrane segment spans residues 850 to 872; that stretch reads ISMAYGQIGMIQALGGFFTYFVI. At 873–915 the chain is on the extracellular side; it reads LAENGFLPFHLLGIRETWDDRWVNDVEDSYGQQWTYEQRKIVE. Residues 916 to 936 traverse the membrane as a helical segment; it reads FTCHTAFFVSIVVVQWADLVI. Residues 937 to 952 lie on the Cytoplasmic side of the membrane; that stretch reads CKTRRNSVFQQGMKNK. A Phosphoserine; by PKA modification is found at Ser943. Residues 953-973 form a helical membrane-spanning segment; it reads ILIFGLFEETALAAFLSYCPG. At 974–979 the chain is on the extracellular side; sequence MGAALR. Residues 980-1000 traverse the membrane as a helical segment; sequence MYPLKPTWWFCAFPYSLLIFV. Residues 1001–1023 lie on the Cytoplasmic side of the membrane; it reads YDEVRKLIIRRRPGGWVEKETYY.

It belongs to the cation transport ATPase (P-type) (TC 3.A.3) family. Type IIC subfamily. In terms of assembly, the sodium/potassium-transporting ATPase is composed of a catalytic alpha subunit, an auxiliary non-catalytic beta subunit and an additional regulatory subunit. Interacts with regulatory subunit FXYD1. Interacts with regulatory subunit FXYD3. Interacts with SIK1. Interacts with SLC35G1 and STIM1. Interacts with CLN3; this interaction regulates the sodium/potassium-transporting ATPase complex localization at the plasma membrane. Interacts with SCN7A; activates ATP1A1 P-type sodium:potassium-exchanging transporter activity which indirectly signals to nearby neurons to regulate sodium homeostasis. Phosphorylation on Tyr-10 modulates pumping activity. Phosphorylation of Ser-943 by PKA modulates the response of ATP1A1 to PKC. Dephosphorylation by protein phosphatase 2A (PP2A) following increases in intracellular sodium, leading to increase catalytic activity.

The protein localises to the cell membrane. It localises to the basolateral cell membrane. The protein resides in the sarcolemma. It is found in the cell projection. Its subcellular location is the axon. The protein localises to the melanosome. It catalyses the reaction K(+)(out) + Na(+)(in) + ATP + H2O = K(+)(in) + Na(+)(out) + ADP + phosphate + H(+). In terms of biological role, this is the catalytic component of the active enzyme, which catalyzes the hydrolysis of ATP coupled with the exchange of sodium and potassium ions across the plasma membrane. This action creates the electrochemical gradient of sodium and potassium ions, providing the energy for active transport of various nutrients. Could also be part of an osmosensory signaling pathway that senses body-fluid sodium levels and controls salt intake behavior as well as voluntary water intake to regulate sodium homeostasis. This Mus musculus (Mouse) protein is Sodium/potassium-transporting ATPase subunit alpha-1 (Atp1a1).